A 129-amino-acid chain; its full sequence is Virion-associated protein (129 aa).

Coiled-coil stretches lie at residues 1–31 (MANLNQIQKEVSEILSDQKSMKADIKAILEL) and 38–59 (IKESLETVAAKIVNDLTKLIND). A capsid binding region spans residues 122 to 129 (PAGWPNQF).

It belongs to the caulimovirus ORF III family. Homotetramer, through coiled-coil domain. Homotrimer when bound on icosehadral capsid. Interacts with capsid protein, and with movement protein.

The protein resides in the virion. The protein localises to the host cell junction. It localises to the host plasmodesma. Its function is as follows. Plays a role in virus cell-to-cell and plant-to-plant transmission. Interacts with virion icosahedral capsid and movement protein, thereby facilitating virion cell-to-cell transmission through plasmodesmata opened by viral movement protein. Also interacts with aphid transmission factor, attaching the virion to aphid stylet when the animal feeds on an virus infected plant. Aphid saliva may later detach the virion, inducing release of infectious particles when the animal feeds on a new plant. This Cauliflower mosaic virus (strain Strasbourg) (CaMV) protein is Virion-associated protein.